A 231-amino-acid polypeptide reads, in one-letter code: Uracil phosphoribosyltransferase (231 aa).

Residue 38–42 (KGLVR) participates in GTP binding. 5-phospho-alpha-D-ribose 1-diphosphate is bound by residues Arg87, Arg112, and 140–148 (DPMIATGST). Uracil is bound by residues Ile203 and 208 to 210 (GDA). Residue Asp209 coordinates 5-phospho-alpha-D-ribose 1-diphosphate.

The protein belongs to the UPRTase family. Requires Mg(2+) as cofactor.

The catalysed reaction is UMP + diphosphate = 5-phospho-alpha-D-ribose 1-diphosphate + uracil. The protein operates within pyrimidine metabolism; UMP biosynthesis via salvage pathway; UMP from uracil: step 1/1. Allosterically activated by GTP. Functionally, catalyzes the conversion of uracil and 5-phospho-alpha-D-ribose 1-diphosphate (PRPP) to UMP and diphosphate. The chain is Uracil phosphoribosyltransferase from Methanococcus maripaludis (strain C5 / ATCC BAA-1333).